Consider the following 716-residue polypeptide: DNA replication licensing factor MCM7 (716 aa).

The C4-type zinc-finger motif lies at 178 to 205 (CEDCGHEIYQEVTSRVFMPLFKCPSSRC). One can recognise an MCM domain in the interval 326–531 (IYNKLSRSLA…MDSDLELAKH (206 aa)). 376–383 (GDPGVAKS) contributes to the ATP binding site. The short motif at 508-511 (SRFD) is the Arginine finger element.

The protein belongs to the MCM family. As to quaternary structure, component of the minichromosome maintenance (MCM) complex, a heterotetramer composed of MCM2, MCM3, MCM4, MCM5, MCM6 and MCM7. Interacts with ETG1. In terms of tissue distribution, expressed in shoot apex and flower buds.

The protein localises to the nucleus. Its subcellular location is the cytoplasm. The catalysed reaction is ATP + H2O = ADP + phosphate + H(+). Its function is as follows. Probable component of the MCM2-7 complex (MCM complex) that may function as a DNA helicase and which is essential to undergo a single round of replication initiation and elongation per cell cycle in eukaryotic cells. Required for megagametophyte and embryo development. The polypeptide is DNA replication licensing factor MCM7 (MCM7) (Arabidopsis thaliana (Mouse-ear cress)).